The following is a 656-amino-acid chain: Pheromone-processing carboxypeptidase KEX1 (656 aa).

The N-terminal stretch at 1–17 (MFFHAILVLIQVALALG) is a signal peptide. The Lumenal portion of the chain corresponds to 18–536 (ASPRAGSSER…DNNTSHKIER (519 aa)). N-linked (GlcNAc...) asparagine glycosylation is found at asparagine 61 and asparagine 118. Residues serine 180 and aspartate 388 contribute to the active site. N-linked (GlcNAc...) asparagine glycosylation is found at asparagine 434 and asparagine 442. Histidine 445 is an active-site residue. Residues 537 to 557 (AIQLLVIIVLLWGIYALYSSY) traverse the membrane as a helical segment. Residues 558–656 (KSRPSSIIKS…SRNEPSSNQK (99 aa)) are Cytoplasmic-facing. Residues 626-656 (MSSASPIDDFVVVSDDEEEEPSRNEPSSNQK) form a disordered region.

Belongs to the peptidase S10 family.

It is found in the golgi apparatus. The protein resides in the trans-Golgi network membrane. The enzyme catalyses Preferential release of a C-terminal arginine or lysine residue.. Its function is as follows. Protease with a carboxypeptidase B-like function involved in the C-terminal processing of the lysine and arginine residues from protein precursors. Promotes cell fusion and is involved in the programmed cell death. In Meyerozyma guilliermondii (strain ATCC 6260 / CBS 566 / DSM 6381 / JCM 1539 / NBRC 10279 / NRRL Y-324) (Yeast), this protein is Pheromone-processing carboxypeptidase KEX1 (KEX1).